The following is a 406-amino-acid chain: Nodal homolog (406 aa).

A signal peptide spans 1–18 (MAFLTAVLYLGFACISQG). Positions 19-281 (LPTWPDRVES…RVPGIRRHRR (263 aa)) are excised as a propeptide. 3 N-linked (GlcNAc...) asparagine glycosylation sites follow: asparagine 71, asparagine 136, and asparagine 172. A disordered region spans residues 195-222 (KERAERGSGMSNAEFIDAPGPSQQYNPH). Disulfide bonds link cysteine 306–cysteine 372, cysteine 335–cysteine 403, and cysteine 339–cysteine 405. The N-linked (GlcNAc...) asparagine glycan is linked to asparagine 344.

It belongs to the TGF-beta family. As to quaternary structure, homodimer; disulfide-linked. Interacts with, and is inhibited by cer1 and gdf10/bmp3b. In terms of tissue distribution, in the first phase of expression, localized to the vegetal region of the blastula. During gastrulation (stage 10.5), this expression disappears and instead becomes localized to the dorsal marginal zone, with enrichment in the organizer. During the second phase of expression in neurulae and tailbud embryos, expression restarts firstly in two symmetric patches near the posterior end of the notochord, and then in a large asymmetrical domain in the left lateral plate mesoderm.

The protein localises to the secreted. Cooperation and regulatory loops of multiple nodals are essential for mesendoderm patterning in early embryos. Essential for mesoderm formation and axial patterning during embryonic development. Activates the activin-like signaling pathway to induce dorsal and ventral mesoderm in animal cap ectoderm. In addition, also dorsalizes ventral marginal zone (VMZ) tissues during gastrulation. Acts in a downstream signaling cascade via cripto and cer1 to mediate cardiogenesis in embryonic mesoderm. Directs the orientation of the left-right axis by driving the left-specific gene cascade in the left lateral plate mesoderm. This is Nodal homolog from Xenopus laevis (African clawed frog).